Here is a 507-residue protein sequence, read N- to C-terminus: ATP synthase subunit alpha, chloroplastic (507 aa).

170–177 (GDRQTGKT) is a binding site for ATP. Position 257 is a phosphothreonine (Thr-257).

The protein belongs to the ATPase alpha/beta chains family. In terms of assembly, F-type ATPases have 2 components, CF(1) - the catalytic core - and CF(0) - the membrane proton channel. CF(1) has five subunits: alpha(3), beta(3), gamma(1), delta(1), epsilon(1). CF(0) has four main subunits: a, b, b' and c.

Its subcellular location is the plastid. The protein localises to the chloroplast thylakoid membrane. It carries out the reaction ATP + H2O + 4 H(+)(in) = ADP + phosphate + 5 H(+)(out). In terms of biological role, produces ATP from ADP in the presence of a proton gradient across the membrane. The alpha chain is a regulatory subunit. In Draba nemorosa (Woodland whitlowgrass), this protein is ATP synthase subunit alpha, chloroplastic.